The sequence spans 100 residues: Integration host factor subunit beta (100 aa).

Belongs to the bacterial histone-like protein family. As to quaternary structure, heterodimer of an alpha and a beta chain.

In terms of biological role, this protein is one of the two subunits of integration host factor, a specific DNA-binding protein that functions in genetic recombination as well as in transcriptional and translational control. This is Integration host factor subunit beta from Agrobacterium fabrum (strain C58 / ATCC 33970) (Agrobacterium tumefaciens (strain C58)).